We begin with the raw amino-acid sequence, 510 residues long: Light-independent protochlorophyllide reductase subunit B (510 aa).

Asp-36 lines the [4Fe-4S] cluster pocket. Catalysis depends on Asp-296, which acts as the Proton donor. 431–432 (GM) is a binding site for substrate.

Belongs to the ChlB/BchB/BchZ family. As to quaternary structure, protochlorophyllide reductase is composed of three subunits; ChlL, ChlN and ChlB. Forms a heterotetramer of two ChlB and two ChlN subunits. [4Fe-4S] cluster is required as a cofactor.

The enzyme catalyses chlorophyllide a + oxidized 2[4Fe-4S]-[ferredoxin] + 2 ADP + 2 phosphate = protochlorophyllide a + reduced 2[4Fe-4S]-[ferredoxin] + 2 ATP + 2 H2O. It participates in porphyrin-containing compound metabolism; chlorophyll biosynthesis (light-independent). Its function is as follows. Component of the dark-operative protochlorophyllide reductase (DPOR) that uses Mg-ATP and reduced ferredoxin to reduce ring D of protochlorophyllide (Pchlide) to form chlorophyllide a (Chlide). This reaction is light-independent. The NB-protein (ChlN-ChlB) is the catalytic component of the complex. The polypeptide is Light-independent protochlorophyllide reductase subunit B (Synechococcus sp. (strain JA-3-3Ab) (Cyanobacteria bacterium Yellowstone A-Prime)).